The primary structure comprises 54 residues: Ovomucoid (54 aa).

The Kazal-like domain maps to 4–54; it reads VDCSDYPKPVCSLEYMPLCGSDSKTYSNKCDFCNAFVDSNGTLSLSHFGKC. Intrachain disulfides connect cysteine 6-cysteine 36, cysteine 14-cysteine 33, and cysteine 22-cysteine 54. Residue asparagine 43 is glycosylated (N-linked (GlcNAc...) asparagine).

The protein resides in the secreted. This chain is Ovomucoid, found in Circus aeruginosus (Western marsh harrier).